A 385-amino-acid chain; its full sequence is Centrosomal protein of 44 kDa (385 aa).

The tract at residues 11-191 (RKLEQRLRTL…TKCYKSALLE (181 aa)) is binds with microtubules and centrioles. The span at 194 to 204 (EEEEPTSDCEE) shows a compositional bias: acidic residues. A disordered region spans residues 194 to 224 (EEEEPTSDCEEDSHLQREMGSPFETAEETPN). Coiled coils occupy residues 224–263 (NSEQ…KGKI) and 353–379 (TEES…ELLK).

As to quaternary structure, binds to centriolar microtubules.

It localises to the cytoplasm. Its subcellular location is the cytoskeleton. The protein resides in the microtubule organizing center. The protein localises to the centrosome. It is found in the centriole. It localises to the spindle pole. Its subcellular location is the midbody. Centriole-enriched microtubule-binding protein involved in centriole biogenesis. In collaboration with CEP295 and POC1B, is required for the centriole-to-centrosome conversion by ensuring the formation of bona fide centriole wall. Functions as a linker component that maintains centrosome cohesion. Associates with CROCC and regulates its stability and localization to the centrosome. This is Centrosomal protein of 44 kDa (cep44) from Xenopus tropicalis (Western clawed frog).